Here is a 37-residue protein sequence, read N- to C-terminus: Large ribosomal subunit protein bL36 (37 aa).

The protein belongs to the bacterial ribosomal protein bL36 family.

The polypeptide is Large ribosomal subunit protein bL36 (Brevibacillus brevis (strain 47 / JCM 6285 / NBRC 100599)).